Consider the following 199-residue polypeptide: Recombination protein RecR (199 aa).

A C4-type zinc finger spans residues 58–73; it reads CKVCTNLTDQEVCNIC. The Toprim domain occupies 81-176; it reads LLICVVEDPR…KVSRIAHGIP (96 aa).

The protein belongs to the RecR family.

In terms of biological role, may play a role in DNA repair. It seems to be involved in an RecBC-independent recombinational process of DNA repair. It may act with RecF and RecO. In Alkaliphilus oremlandii (strain OhILAs) (Clostridium oremlandii (strain OhILAs)), this protein is Recombination protein RecR.